The chain runs to 107 residues: CLAVATA3/ESR (CLE)-related protein 13 (107 aa).

The first 25 residues, 1 to 25, serve as a signal peptide directing secretion; that stretch reads MATTRVSHVLGFLLWISLLIFVSIG. Asn-29 carries an N-linked (GlcNAc...) asparagine glycan. Residues 79-107 are disordered; sequence ALPAGGSEIDPRYGVEKRLVPSGPNPLHH. Basic and acidic residues predominate over residues 87-97; the sequence is IDPRYGVEKRL. Hydroxyproline is present on residues Pro-99 and Pro-102. Pro-102 carries an O-linked (Ara...) hydroxyproline glycan.

It belongs to the CLV3/ESR signal peptide family. In terms of processing, the O-glycosylation (arabinosylation) of the hydroxyproline Pro-102 enhances binding affinity of the CLE13p peptide for its receptor. Mostly expressed in seedlings, roots, flowers, stems and apex, and, to a lower extent, in leaves and siliques.

The protein resides in the secreted. Its subcellular location is the extracellular space. Extracellular signal peptide that regulates cell fate. Represses root apical meristem maintenance. Regulates the transition of protophloem cells from proliferation to differentiation, thus impinging on postembryonic growth capacity of the root meristem; this signaling pathway requires CRN and CLV2. This chain is CLAVATA3/ESR (CLE)-related protein 13, found in Arabidopsis thaliana (Mouse-ear cress).